The primary structure comprises 162 residues: UPF0305 protein MMP0665 (162 aa).

The protein belongs to the UPF0305 family.

The sequence is that of UPF0305 protein MMP0665 from Methanococcus maripaludis (strain DSM 14266 / JCM 13030 / NBRC 101832 / S2 / LL).